The primary structure comprises 220 residues: Deoxyribose-phosphate aldolase (220 aa).

The active-site Proton donor/acceptor is the aspartate 89. Residue lysine 151 is the Schiff-base intermediate with acetaldehyde of the active site. Lysine 180 (proton donor/acceptor) is an active-site residue.

Belongs to the DeoC/FbaB aldolase family. DeoC type 1 subfamily.

It is found in the cytoplasm. The enzyme catalyses 2-deoxy-D-ribose 5-phosphate = D-glyceraldehyde 3-phosphate + acetaldehyde. Its pathway is carbohydrate degradation; 2-deoxy-D-ribose 1-phosphate degradation; D-glyceraldehyde 3-phosphate and acetaldehyde from 2-deoxy-alpha-D-ribose 1-phosphate: step 2/2. Catalyzes a reversible aldol reaction between acetaldehyde and D-glyceraldehyde 3-phosphate to generate 2-deoxy-D-ribose 5-phosphate. This chain is Deoxyribose-phosphate aldolase, found in Lactococcus lactis subsp. cremoris (strain SK11).